Reading from the N-terminus, the 272-residue chain is Phosphatidylglycerol--prolipoprotein diacylglyceryl transferase (272 aa).

The next 7 helical transmembrane spans lie at 17-37, 55-75, 90-110, 125-145, 174-194, 202-222, and 230-250; these read LQVH…WGLA, LVFY…VLFY, VWTG…AMLF, FIAP…FIGG, PSQI…LWWF, MAVS…MEFF, and GFIL…MLLI. A 1,2-diacyl-sn-glycero-3-phospho-(1'-sn-glycerol) is bound at residue Arg138.

It belongs to the Lgt family.

It localises to the cell inner membrane. It carries out the reaction L-cysteinyl-[prolipoprotein] + a 1,2-diacyl-sn-glycero-3-phospho-(1'-sn-glycerol) = an S-1,2-diacyl-sn-glyceryl-L-cysteinyl-[prolipoprotein] + sn-glycerol 1-phosphate + H(+). Its pathway is protein modification; lipoprotein biosynthesis (diacylglyceryl transfer). Its function is as follows. Catalyzes the transfer of the diacylglyceryl group from phosphatidylglycerol to the sulfhydryl group of the N-terminal cysteine of a prolipoprotein, the first step in the formation of mature lipoproteins. The polypeptide is Phosphatidylglycerol--prolipoprotein diacylglyceryl transferase (Acinetobacter baumannii (strain ACICU)).